The sequence spans 560 residues: Zinc finger protein 250 (560 aa).

Residues 22-93 (LTFEDVAVLL…DRKGAKKSQG (72 aa)) enclose the KRAB domain. Residues Lys125, Lys136, Lys148, and Lys162 each participate in a glycyl lysine isopeptide (Lys-Gly) (interchain with G-Cter in SUMO2) cross-link. The C2H2-type 1 zinc-finger motif lies at 199–221 (YMCVECGKCFGRSSHLLQHQRIH). Lys225 is covalently cross-linked (Glycyl lysine isopeptide (Lys-Gly) (interchain with G-Cter in SUMO2)). 7 C2H2-type zinc fingers span residues 227 to 249 (YVCS…RRIH), 255 to 277 (YECN…HKIH), 283 to 305 (HECL…QRIH), 311 to 333 (YVCP…QRVH), 339 to 361 (HRCN…QRIH), 367 to 389 (YTCS…HNVH), and 395 to 417 (YECS…ERIH). Lys421 participates in a covalent cross-link: Glycyl lysine isopeptide (Lys-Gly) (interchain with G-Cter in SUMO2). 5 consecutive C2H2-type zinc fingers follow at residues 423 to 445 (YACY…QRVH), 451 to 473 (YVCG…ERIH), 479 to 501 (FQCT…LRTH), 507 to 529 (YECN…QRIH), and 535 to 557 (YECG…QKVH).

This sequence belongs to the krueppel C2H2-type zinc-finger protein family.

Its subcellular location is the nucleus. May be involved in transcriptional regulation. The protein is Zinc finger protein 250 (ZNF250) of Homo sapiens (Human).